The following is a 214-amino-acid chain: Thiamine-phosphate synthase (214 aa).

4-amino-2-methyl-5-(diphosphooxymethyl)pyrimidine contacts are provided by residues 37 to 41 (QYREK) and N73. D74 and D93 together coordinate Mg(2+). S112 serves as a coordination point for 4-amino-2-methyl-5-(diphosphooxymethyl)pyrimidine. 139 to 141 (TIS) contributes to the 2-[(2R,5Z)-2-carboxy-4-methylthiazol-5(2H)-ylidene]ethyl phosphate binding site. K142 is a binding site for 4-amino-2-methyl-5-(diphosphooxymethyl)pyrimidine. 2-[(2R,5Z)-2-carboxy-4-methylthiazol-5(2H)-ylidene]ethyl phosphate-binding positions include G171 and 191–192 (IS).

This sequence belongs to the thiamine-phosphate synthase family. Mg(2+) serves as cofactor.

The catalysed reaction is 2-[(2R,5Z)-2-carboxy-4-methylthiazol-5(2H)-ylidene]ethyl phosphate + 4-amino-2-methyl-5-(diphosphooxymethyl)pyrimidine + 2 H(+) = thiamine phosphate + CO2 + diphosphate. The enzyme catalyses 2-(2-carboxy-4-methylthiazol-5-yl)ethyl phosphate + 4-amino-2-methyl-5-(diphosphooxymethyl)pyrimidine + 2 H(+) = thiamine phosphate + CO2 + diphosphate. It catalyses the reaction 4-methyl-5-(2-phosphooxyethyl)-thiazole + 4-amino-2-methyl-5-(diphosphooxymethyl)pyrimidine + H(+) = thiamine phosphate + diphosphate. It functions in the pathway cofactor biosynthesis; thiamine diphosphate biosynthesis; thiamine phosphate from 4-amino-2-methyl-5-diphosphomethylpyrimidine and 4-methyl-5-(2-phosphoethyl)-thiazole: step 1/1. Functionally, condenses 4-methyl-5-(beta-hydroxyethyl)thiazole monophosphate (THZ-P) and 2-methyl-4-amino-5-hydroxymethyl pyrimidine pyrophosphate (HMP-PP) to form thiamine monophosphate (TMP). The protein is Thiamine-phosphate synthase of Listeria monocytogenes serotype 4a (strain HCC23).